The sequence spans 175 residues: MLDLGLTKMALIGVVALVVLGPERLPRVARTAGALFGRAQRYINDVKAEVTREIELDELRRMKSEFEAAATNVETSVQDNLRKHESELNDAWNSGTSVSPSIAGGALEDVGNAGNTSWPGSTPAAGAKRKNWRVRQTAMPTWYKRATTRRTRVQSGAARVARHTPATMRRPTRFF.

Residues M1 to G21 traverse the membrane as a helical segment. Disordered stretches follow at residues G104–W132 and S155–F175.

Belongs to the TatB family. In terms of assembly, the Tat system comprises two distinct complexes: a TatABC complex, containing multiple copies of TatA, TatB and TatC subunits, and a separate TatA complex, containing only TatA subunits. Substrates initially bind to the TatABC complex, which probably triggers association of the separate TatA complex to form the active translocon.

It is found in the cell inner membrane. Its function is as follows. Part of the twin-arginine translocation (Tat) system that transports large folded proteins containing a characteristic twin-arginine motif in their signal peptide across membranes. Together with TatC, TatB is part of a receptor directly interacting with Tat signal peptides. TatB may form an oligomeric binding site that transiently accommodates folded Tat precursor proteins before their translocation. This chain is Sec-independent protein translocase protein TatB, found in Paraburkholderia xenovorans (strain LB400).